The primary structure comprises 301 residues: Putative S-adenosyl-L-methionine-dependent methyltransferase Mflv_5024 (301 aa).

S-adenosyl-L-methionine-binding positions include D129 and 158–159 (DL).

It belongs to the UPF0677 family.

Functionally, exhibits S-adenosyl-L-methionine-dependent methyltransferase activity. In Mycolicibacterium gilvum (strain PYR-GCK) (Mycobacterium gilvum (strain PYR-GCK)), this protein is Putative S-adenosyl-L-methionine-dependent methyltransferase Mflv_5024.